Consider the following 394-residue polypeptide: Tubulin-like protein CetZ4 (394 aa).

GTP contacts are provided by residues 10–14, 110–112, Glu-142, Asn-169, and Asn-187; these read QAGGK and GTG.

The protein belongs to the CetZ family.

The protein resides in the cytoplasm. Involved in cell shape control. This Haloferax volcanii (strain ATCC 29605 / DSM 3757 / JCM 8879 / NBRC 14742 / NCIMB 2012 / VKM B-1768 / DS2) (Halobacterium volcanii) protein is Tubulin-like protein CetZ4.